Consider the following 407-residue polypeptide: MSQNESGTIAIPMYDKDDAVLVLEDGQVYVGKPYGALGETTGEIVFATGMTGYQETLTDPSYDRQIVVQTFPHIGDTGVNSEDPESSRIWVAGYIVRDPSPNVSNWRAEGSLDDDLAKNGIVGLSHIDTRKLVRHLRSAGVMRAGIFSGDALTDQATGALKTIEQLLEDVKNTPQMQGLSLYDEVSTKETYTIEPCGEYEGKEPLYTVAAVDLGIKGMTPHRMAERGCRVHVVPSTITFAEIENLNPDGVFFSNGPGDPEQAGPEIELLRQVLDAGYPFFGICFGNQLLGRALGFGTYKLKFGHRGINQPVKDLTTGKVEVTAHNHGFAVDAPIGKQVDAPFENGKYGKVFVSHIDLNDDVVEGLQCVDIPAFSVQYHPEAAAGPHDAAYLFDRFCELMKNNSKEGK.

The segment at 1 to 203 is CPSase; the sequence is MSQNESGTIA…EPCGEYEGKE (203 aa). L-glutamine is bound by residues S61, G255, and G257. Residues 207–405 form the Glutamine amidotransferase type-1 domain; that stretch reads TVAAVDLGIK…CELMKNNSKE (199 aa). The active-site Nucleophile is the C283. L-glutamine is bound by residues F284, Q287, N325, G327, and F328. Catalysis depends on residues H378 and E380.

Belongs to the CarA family. In terms of assembly, composed of two chains; the small (or glutamine) chain promotes the hydrolysis of glutamine to ammonia, which is used by the large (or ammonia) chain to synthesize carbamoyl phosphate. Tetramer of heterodimers (alpha,beta)4.

The enzyme catalyses hydrogencarbonate + L-glutamine + 2 ATP + H2O = carbamoyl phosphate + L-glutamate + 2 ADP + phosphate + 2 H(+). It catalyses the reaction L-glutamine + H2O = L-glutamate + NH4(+). The protein operates within amino-acid biosynthesis; L-arginine biosynthesis; carbamoyl phosphate from bicarbonate: step 1/1. Its pathway is pyrimidine metabolism; UMP biosynthesis via de novo pathway; (S)-dihydroorotate from bicarbonate: step 1/3. Functionally, small subunit of the glutamine-dependent carbamoyl phosphate synthetase (CPSase). CPSase catalyzes the formation of carbamoyl phosphate from the ammonia moiety of glutamine, carbonate, and phosphate donated by ATP, constituting the first step of 2 biosynthetic pathways, one leading to arginine and/or urea and the other to pyrimidine nucleotides. The small subunit (glutamine amidotransferase) binds and cleaves glutamine to supply the large subunit with the substrate ammonia. This is Carbamoyl phosphate synthase small chain from Bifidobacterium longum (strain NCC 2705).